The following is a 539-amino-acid chain: Phosphoenolpyruvate carboxykinase (ATP) (539 aa).

The substrate site is built by Arg-64, Tyr-206, and Lys-212. ATP is bound by residues Lys-212, His-231, and 247 to 255 (GLSGTGKTT). Mn(2+) contacts are provided by Lys-212 and His-231. Asp-268 lines the Mn(2+) pocket. ATP is bound by residues Glu-296, Arg-332, 448 to 449 (RI), and Thr-454. Arg-332 provides a ligand contact to substrate.

It belongs to the phosphoenolpyruvate carboxykinase (ATP) family. As to quaternary structure, monomer. Mn(2+) serves as cofactor.

The protein resides in the cytoplasm. The catalysed reaction is oxaloacetate + ATP = phosphoenolpyruvate + ADP + CO2. It participates in carbohydrate biosynthesis; gluconeogenesis. In terms of biological role, involved in the gluconeogenesis. Catalyzes the conversion of oxaloacetate (OAA) to phosphoenolpyruvate (PEP) through direct phosphoryl transfer between the nucleoside triphosphate and OAA. In Hamiltonella defensa subsp. Acyrthosiphon pisum (strain 5AT), this protein is Phosphoenolpyruvate carboxykinase (ATP).